A 444-amino-acid polypeptide reads, in one-letter code: Signal recognition particle 54 kDa protein (444 aa).

GTP is bound by residues 104–111 (GLQGSGKT), 184–188 (DTAGR), and 242–245 (TKLD).

The protein belongs to the GTP-binding SRP family. SRP54 subfamily. Part of the signal recognition particle protein translocation system, which is composed of SRP and FtsY. Archaeal SRP consists of a 7S RNA molecule of 300 nucleotides and two protein subunits: SRP54 and SRP19.

It localises to the cytoplasm. The catalysed reaction is GTP + H2O = GDP + phosphate + H(+). Involved in targeting and insertion of nascent membrane proteins into the cytoplasmic membrane. Binds to the hydrophobic signal sequence of the ribosome-nascent chain (RNC) as it emerges from the ribosomes. The SRP-RNC complex is then targeted to the cytoplasmic membrane where it interacts with the SRP receptor FtsY. The sequence is that of Signal recognition particle 54 kDa protein from Methanothrix thermoacetophila (strain DSM 6194 / JCM 14653 / NBRC 101360 / PT) (Methanosaeta thermophila).